A 952-amino-acid chain; its full sequence is Ubiquitin carboxyl-terminal hydrolase 15 (952 aa).

At A2 the chain carries N-acetylalanine. A mediates interaction with SART3 region spans residues A2 to G223. Residues A7–V118 form the DUSP domain. One can recognise a USP domain in the interval C260–Q904. Catalysis depends on C269, which acts as the Nucleophile. A Phosphothreonine modification is found at T573. A disordered region spans residues E597 to L665. Acidic residues predominate over residues M627–S644. The Proton acceptor role is filled by H862. Positions S923 to N952 are disordered. Positions E931–N945 are enriched in acidic residues. Residues S932 and S936 each carry the phosphoserine modification.

It belongs to the peptidase C19 family. In terms of assembly, a homodimer structure has been reported; however it is unclear whether the protein form a homodimer in vivo. Identified in a complex with the COP9 signalosome complex (CSN). Interacts with SMAD1, SMAD2 and SMAD3; the interaction is direct. Forms a complex with SMURF2 and SMAD7. Interacts with TGFBR1. Interacts with SART3; the interaction is direct. May interact with RNF20 and RNF40. May interact with PRKN. Interacts with INCA1. Phosphorylated. Phosphorylation protects against ubiquitination and subsequent degradation by the proteasome. In terms of processing, ubiquitinated, leading to degradation by the proteasome. As to expression, highly expressed in testis and spleen, and at lower level in other tissues.

Its subcellular location is the cytoplasm. It localises to the nucleus. The protein localises to the mitochondrion. The catalysed reaction is Thiol-dependent hydrolysis of ester, thioester, amide, peptide and isopeptide bonds formed by the C-terminal Gly of ubiquitin (a 76-residue protein attached to proteins as an intracellular targeting signal).. Hydrolase that removes conjugated ubiquitin from target proteins and regulates various pathways such as the TGF-beta receptor signaling, NF-kappa-B and RNF41/NRDP1-PRKN pathways. Acts as a key regulator of TGF-beta receptor signaling pathway, but the precise mechanism is still unclear: according to a report, acts by promoting deubiquitination of monoubiquitinated R-SMADs (SMAD1, SMAD2 and/or SMAD3), thereby alleviating inhibition of R-SMADs and promoting activation of TGF-beta target genes. According to another reports, regulates the TGF-beta receptor signaling pathway by mediating deubiquitination and stabilization of TGFBR1, leading to an enhanced TGF-beta signal. Able to mediate deubiquitination of monoubiquitinated substrates, 'Lys-27'-, 'Lys-48'- and 'Lys-63'-linked polyubiquitin chains. May also regulate gene expression and/or DNA repair through the deubiquitination of histone H2B. Acts as an inhibitor of mitophagy by counteracting the action of parkin (PRKN): hydrolyzes cleavage of 'Lys-48'- and 'Lys-63'-linked polyubiquitin chains attached by parkin on target proteins such as MFN2, thereby reducing parkin's ability to drive mitophagy. Acts as an associated component of COP9 signalosome complex (CSN) and regulates different pathways via this association: regulates NF-kappa-B by mediating deubiquitination of NFKBIA and deubiquitinates substrates bound to VCP. Involved in endosome organization by mediating deubiquitination of SQSTM1: ubiquitinated SQSTM1 forms a molecular bridge that restrains cognate vesicles in the perinuclear region and its deubiquitination releases target vesicles for fast transport into the cell periphery. Acts as a negative regulator of antifungal immunity by mediating 'Lys-27'-linked deubiquitination of CARD9, thereby inactivating CARD9. This is Ubiquitin carboxyl-terminal hydrolase 15 (Usp15) from Rattus norvegicus (Rat).